A 594-amino-acid chain; its full sequence is Elongation factor 4 (594 aa).

One can recognise a tr-type G domain in the interval 2 to 184 (KNIRNFSIIA…TIVAKVPAPE (183 aa)). GTP is bound by residues 14 to 19 (DHGKST) and 131 to 134 (NKID).

This sequence belongs to the TRAFAC class translation factor GTPase superfamily. Classic translation factor GTPase family. LepA subfamily.

The protein localises to the cell inner membrane. The catalysed reaction is GTP + H2O = GDP + phosphate + H(+). Its function is as follows. Required for accurate and efficient protein synthesis under certain stress conditions. May act as a fidelity factor of the translation reaction, by catalyzing a one-codon backward translocation of tRNAs on improperly translocated ribosomes. Back-translocation proceeds from a post-translocation (POST) complex to a pre-translocation (PRE) complex, thus giving elongation factor G a second chance to translocate the tRNAs correctly. Binds to ribosomes in a GTP-dependent manner. The sequence is that of Elongation factor 4 from Francisella tularensis subsp. holarctica (strain FTNF002-00 / FTA).